A 196-amino-acid chain; its full sequence is GTP cyclohydrolase-2 (196 aa).

A GTP-binding site is contributed by 49-53; that stretch reads RIHSE. Zn(2+)-binding residues include C54, C65, and C67. Residues Q70, 92 to 94, and T114 each bind GTP; that span reads EGR. D126 serves as the catalytic Proton acceptor. Catalysis depends on R128, which acts as the Nucleophile. 2 residues coordinate GTP: T149 and K154.

It belongs to the GTP cyclohydrolase II family. As to quaternary structure, homodimer. Requires Zn(2+) as cofactor.

The catalysed reaction is GTP + 4 H2O = 2,5-diamino-6-hydroxy-4-(5-phosphoribosylamino)-pyrimidine + formate + 2 phosphate + 3 H(+). The protein operates within cofactor biosynthesis; riboflavin biosynthesis; 5-amino-6-(D-ribitylamino)uracil from GTP: step 1/4. In terms of biological role, catalyzes the conversion of GTP to 2,5-diamino-6-ribosylamino-4(3H)-pyrimidinone 5'-phosphate (DARP), formate and pyrophosphate. This Buchnera aphidicola subsp. Schizaphis graminum (strain Sg) protein is GTP cyclohydrolase-2.